Here is a 443-residue protein sequence, read N- to C-terminus: Major royal jelly protein 7 (443 aa).

The signal sequence occupies residues 1-17 (MTRWLFMVACLGIACQG). 4 N-linked (GlcNAc...) asparagine glycosylation sites follow: Asn145, Asn161, Asn178, and Asn321.

The protein belongs to the major royal jelly protein family. As to expression, found in and secreted from the hypopharyngeal glands of the worker honey bee (at protein level); expression peaks at 12 days post eclosion. Expressed in the brains of adult worker bees peaking at 12 days post eclosion (at protein level). Expressed in the spermatheca of adult queen bees (at protein level); Expression levels are higher in mated queens than in virgin queens.

The protein localises to the secreted. Its function is as follows. Component of royal jelly, a substance produced in the hypopharyngeal gland containing proteins, free amino acids, fatty acids, sugars and other nutrients, which is fed to developing larvae by worker nurse bees. All larvae are fed some royal jelly (also known as worker jelly) early in their development but it forms the principal source of nutrition for larvae destined to become queen bees. Produced in the spermatheca of adult queen bees, along with other major royal jelly proteins, where it may act as a nutrient supply for sperm stored by mated queens, or be involved in energy metabolism. This is Major royal jelly protein 7 from Apis mellifera (Honeybee).